The primary structure comprises 723 residues: Nucleolar protein 11 (723 aa).

K346 is modified (N6-methyllysine). A disordered region spans residues 549–572 (FGPEDGNCSEDSQQLNDKPADTAH).

As to quaternary structure, interacts with UTP4. Interacts with FBL/fibrillarin in a transcription-dependent manner. May associate with the proposed t-UTP subcomplex of the SSU processome containing at least UTP4, WDR43, HEATR1, UTP15, WDR75.

It is found in the nucleus. The protein resides in the nucleolus. Functionally, ribosome biogenesis factor. May be required for both optimal rDNA transcription and small subunit (SSU) pre-rRNA processing at sites A', A0, 1 and 2b. This Mus musculus (Mouse) protein is Nucleolar protein 11 (Nol11).